Consider the following 460-residue polypeptide: GTPase Der (460 aa).

EngA-type G domains are found at residues 4 to 174 (PQVA…PRRE) and 184 to 361 (PKIA…AERS). GTP is bound by residues 10 to 17 (GRPNVGKS), 57 to 61 (DTGGL), 126 to 129 (NKAE), 190 to 197 (GRPNVGKS), 237 to 241 (DTAGI), and 302 to 305 (NKWD). The KH-like domain maps to 362–446 (RRIPTAELNQ…PIELVFRERE (85 aa)).

Belongs to the TRAFAC class TrmE-Era-EngA-EngB-Septin-like GTPase superfamily. EngA (Der) GTPase family. In terms of assembly, associates with the 50S ribosomal subunit.

Its function is as follows. GTPase that plays an essential role in the late steps of ribosome biogenesis. This chain is GTPase Der, found in Thermomicrobium roseum (strain ATCC 27502 / DSM 5159 / P-2).